Consider the following 369-residue polypeptide: 3 beta-hydroxysteroid dehydrogenase type 7 (369 aa).

The Proton acceptor role is filled by tyrosine 159. Lysine 163 lines the NAD(+) pocket. A run of 2 helical transmembrane segments spans residues 289–309 (LLPY…QWLL) and 311–331 (PLVL…NTTF).

This sequence belongs to the 3-beta-HSD family.

The protein localises to the endoplasmic reticulum membrane. It catalyses the reaction 7alpha-hydroxycholesterol + NAD(+) = 7alpha-hydroxycholest-4-en-3-one + NADH + H(+). It carries out the reaction 7alpha,25-dihydroxycholesterol + NAD(+) = 7alpha,25-dihydroxy-4-cholesten-3-one + NADH + H(+). The catalysed reaction is (25R)-cholest-5-en-3beta,7alpha,26-triol + NAD(+) = (25R)-7alpha,26-dihydroxycholest-4-en-3-one + NADH + H(+). The enzyme catalyses (24S)-7alpha-dihydroxycholesterol + NAD(+) = (24S)-7alpha,24-dihydroxycholest-4-en-3-one + NADH + H(+). It participates in lipid metabolism; steroid biosynthesis. The 3-beta-HSD enzymatic system plays a crucial role in the biosynthesis of all classes of hormonal steroids. HSD VII is active against four 7-alpha-hydroxylated sterols. Does not metabolize several different C(19/21) steroids as substrates. Involved in bile acid synthesis. Plays a key role in cell positioning and movement in lymphoid tissues by mediating degradation of 7-alpha,25-dihydroxycholesterol (7-alpha,25-OHC): 7-alpha,25-OHC acts as a ligand for the G protein-coupled receptor GPR183/EBI2, a chemotactic receptor for a number of lymphoid cells. The sequence is that of 3 beta-hydroxysteroid dehydrogenase type 7 from Homo sapiens (Human).